The primary structure comprises 598 residues: MALRCPIVSVLGHVDHGKTSLLDKIRRTRVTQREAGGITQHIGASEIPINTIKKVSKDLLGLFKADLSIPGILVIDTPGHEAFTSLRKRGGALADIAILVVDINEGFKPQTIEAINILKQCKTPFIVAANKVDRIPGWNSSEGPFILNFNEKNQHPNAMTEFEIRLYENIIKHLNELGFDADLFSRVKDTTKTINVVPVSAMTGEGVPDLLVIISGLAQKFLEQKLALNVEGYAKGTVLELKEEKGLGKTIDAIIYDGIAKTGDFLVVGNPDGVIVSKIKALLKPKELDEMRDPKDKFKPSKQISAATGVKISAPDLDSVIAGSPLRIVPKNQVDAAKEEVLQEVEEFTILTDDEGIIIKADTMGSLEALANELRKVNAKIKKAEVGDISKKDVIEASSYASSNPLNGLIISFNTKVLADAKAEIEKSDVKLLEGKIIYKLVEEYEEWTKEMEELMKSDEINRLTKPAMIKILPNCIFRQKEPAVCGVEVLYGTLKIGSPIMSEDGKKLGYVKEMRDSQQENIKEAKVGMQVPVSIDGNIVLGRNAKENDILYVEVPEPEARKLHHEFKDELRGDEKEALSRYMELKQKIENNIFWGM.

A tr-type G domain is found at 3–225 (LRCPIVSVLG…GLAQKFLEQK (223 aa)). Residues 12–19 (GHVDHGKT) form a G1 region. Residue 12–19 (GHVDHGKT) coordinates GTP. The G2 stretch occupies residues 37 to 41 (GITQH). The interval 76–79 (DTPG) is G3. GTP is bound by residues 76–80 (DTPGH) and 130–133 (NKVD). A G4 region spans residues 130–133 (NKVD). The interval 200-202 (SAM) is G5.

It belongs to the TRAFAC class translation factor GTPase superfamily. Classic translation factor GTPase family. IF-2 subfamily.

In terms of biological role, function in general translation initiation by promoting the binding of the formylmethionine-tRNA to ribosomes. Seems to function along with eIF-2. This chain is Probable translation initiation factor IF-2, found in Methanococcus maripaludis (strain C5 / ATCC BAA-1333).